Reading from the N-terminus, the 89-residue chain is Small ribosomal subunit protein uS15 (89 aa).

It belongs to the universal ribosomal protein uS15 family. As to quaternary structure, part of the 30S ribosomal subunit. Forms a bridge to the 50S subunit in the 70S ribosome, contacting the 23S rRNA.

Functionally, one of the primary rRNA binding proteins, it binds directly to 16S rRNA where it helps nucleate assembly of the platform of the 30S subunit by binding and bridging several RNA helices of the 16S rRNA. In terms of biological role, forms an intersubunit bridge (bridge B4) with the 23S rRNA of the 50S subunit in the ribosome. This is Small ribosomal subunit protein uS15 from Corynebacterium aurimucosum (strain ATCC 700975 / DSM 44827 / CIP 107346 / CN-1) (Corynebacterium nigricans).